A 267-amino-acid chain; its full sequence is Small ribosomal subunit protein uS2 (267 aa).

The tract at residues methionine 1–glutamate 72 is disordered. A compositionally biased stretch (acidic residues) spans aspartate 10–glutamate 72.

This sequence belongs to the universal ribosomal protein uS2 family. In terms of processing, the N-terminus is blocked.

The protein is Small ribosomal subunit protein uS2 (rps2) of Haloarcula marismortui (strain ATCC 43049 / DSM 3752 / JCM 8966 / VKM B-1809) (Halobacterium marismortui).